The following is a 507-amino-acid chain: Trigger factor (507 aa).

Residues Gly162 to Pro243 form the PPIase FKBP-type domain. The disordered stretch occupies residues Asn434–Lys507. Residues Glu442–Glu460 show a composition bias toward acidic residues. The span at Val461 to Asp488 shows a compositional bias: low complexity.

Belongs to the FKBP-type PPIase family. Tig subfamily.

It is found in the cytoplasm. It carries out the reaction [protein]-peptidylproline (omega=180) = [protein]-peptidylproline (omega=0). Its function is as follows. Involved in protein export. Acts as a chaperone by maintaining the newly synthesized protein in an open conformation. Functions as a peptidyl-prolyl cis-trans isomerase. The sequence is that of Trigger factor from Parafrankia sp. (strain EAN1pec).